The chain runs to 130 residues: Ribosome-binding factor A (130 aa).

The protein belongs to the RbfA family. Monomer. Binds 30S ribosomal subunits, but not 50S ribosomal subunits or 70S ribosomes.

Its subcellular location is the cytoplasm. Functionally, one of several proteins that assist in the late maturation steps of the functional core of the 30S ribosomal subunit. Associates with free 30S ribosomal subunits (but not with 30S subunits that are part of 70S ribosomes or polysomes). Required for efficient processing of 16S rRNA. May interact with the 5'-terminal helix region of 16S rRNA. This is Ribosome-binding factor A from Prochlorococcus marinus (strain MIT 9215).